Here is a 102-residue protein sequence, read N- to C-terminus: Large ribosomal subunit protein bL21 (102 aa).

This sequence belongs to the bacterial ribosomal protein bL21 family. Part of the 50S ribosomal subunit. Contacts protein L20.

This protein binds to 23S rRNA in the presence of protein L20. The polypeptide is Large ribosomal subunit protein bL21 (Ehrlichia ruminantium (strain Gardel)).